A 363-amino-acid chain; its full sequence is UDP-3-O-acylglucosamine N-acyltransferase (363 aa).

His259 acts as the Proton acceptor in catalysis.

The protein belongs to the transferase hexapeptide repeat family. LpxD subfamily. Homotrimer.

It carries out the reaction a UDP-3-O-[(3R)-3-hydroxyacyl]-alpha-D-glucosamine + a (3R)-hydroxyacyl-[ACP] = a UDP-2-N,3-O-bis[(3R)-3-hydroxyacyl]-alpha-D-glucosamine + holo-[ACP] + H(+). It functions in the pathway bacterial outer membrane biogenesis; LPS lipid A biosynthesis. Its function is as follows. Catalyzes the N-acylation of UDP-3-O-acylglucosamine using 3-hydroxyacyl-ACP as the acyl donor. Is involved in the biosynthesis of lipid A, a phosphorylated glycolipid that anchors the lipopolysaccharide to the outer membrane of the cell. The sequence is that of UDP-3-O-acylglucosamine N-acyltransferase from Ruegeria pomeroyi (strain ATCC 700808 / DSM 15171 / DSS-3) (Silicibacter pomeroyi).